Consider the following 365-residue polypeptide: Cobalt-precorrin-5B C(1)-methyltransferase (365 aa).

It belongs to the CbiD family.

The catalysed reaction is Co-precorrin-5B + S-adenosyl-L-methionine = Co-precorrin-6A + S-adenosyl-L-homocysteine. It participates in cofactor biosynthesis; adenosylcobalamin biosynthesis; cob(II)yrinate a,c-diamide from sirohydrochlorin (anaerobic route): step 6/10. Functionally, catalyzes the methylation of C-1 in cobalt-precorrin-5B to form cobalt-precorrin-6A. This is Cobalt-precorrin-5B C(1)-methyltransferase from Moorella thermoacetica (strain ATCC 39073 / JCM 9320).